The sequence spans 62 residues: Venom peptide 6 (62 aa).

The N-terminal stretch at 1-26 is a signal peptide; the sequence is MKSTSVFILFAGIAIMACLQMTGTEA. AXPX repeat units follow at residues 26–29, 30–33, and 40–43; these read AAPS, ASPN, and ADPD. Positions 27–46 are excised as a propeptide; the sequence is APSASPNPTPVARADPDPEA.

The protein belongs to the MCD family. In terms of tissue distribution, expressed by the venom gland.

Its subcellular location is the secreted. It localises to the target cell membrane. Antimicrobial peptide with strong activity against the fungus B.cinerea (MIC=5 uM) and the Gram-positive bacterium S.aureus (MIC=50 uM), and no activity against C.albicans (MIC&gt;200 uM), and the Gram-negative bacterium E.coli (MIC&gt;200 uM). Shows cytolytic activity against insect cell lines. Has no hemolytic activity against human erythrocytes. In vivo, peptide injection in the vicinity of the head and thorax of lepidopteran larvae induces feeding disorder that lasts one or two days before recovering. The protein is Venom peptide 6 of Eumenes pomiformis (Potter wasp).